A 343-amino-acid polypeptide reads, in one-letter code: Cytoplasmic tRNA 2-thiolation protein 1 (343 aa).

This sequence belongs to the TtcA family. CTU1/NCS6/ATPBD3 subfamily.

The protein localises to the cytoplasm. Its pathway is tRNA modification; 5-methoxycarbonylmethyl-2-thiouridine-tRNA biosynthesis. Its function is as follows. Plays a central role in 2-thiolation of mcm(5)S(2)U at tRNA wobble positions of tRNA(Lys), tRNA(Glu) and tRNA(Gln). Directly binds tRNAs and probably acts by catalyzing adenylation of tRNAs, an intermediate required for 2-thiolation. It is unclear whether it acts as a sulfurtransferase that transfers sulfur from thiocarboxylated URM1 onto the uridine of tRNAs at wobble position. The sequence is that of Cytoplasmic tRNA 2-thiolation protein 1 from Drosophila sechellia (Fruit fly).